The primary structure comprises 76 residues: Sulfur carrier protein TusA (76 aa).

Cysteine 14 acts as the Cysteine persulfide intermediate in catalysis.

It belongs to the sulfur carrier protein TusA family. In terms of assembly, interacts with IscS.

It is found in the cytoplasm. It functions in the pathway tRNA modification. In terms of biological role, sulfur carrier protein involved in sulfur trafficking in the cell. Part of a sulfur-relay system required for 2-thiolation during synthesis of 2-thiouridine of the modified wobble base 5-methylaminomethyl-2-thiouridine (mnm(5)s(2)U) in tRNA. Interacts with IscS and stimulates its cysteine desulfurase activity. Accepts an activated sulfur from IscS, which is then transferred to TusD, and thus determines the direction of sulfur flow from IscS to 2-thiouridine formation. Also appears to be involved in sulfur transfer for the biosynthesis of molybdopterin. This chain is Sulfur carrier protein TusA, found in Buchnera aphidicola subsp. Acyrthosiphon pisum (strain 5A).